Reading from the N-terminus, the 375-residue chain is FK506-binding protein 4 (375 aa).

Disordered regions lie at residues 55-78 (GFEDDYDEEEQEKEPKSTDEEEEI) and 127-265 (PPDF…SKMT). Composition is skewed to acidic residues over residues 56-66 (FEDDYDEEEQE) and 131-173 (FDQD…DPDR). The span at 196-216 (DSKKRAAEKPVKETAAKKLKA) shows a compositional bias: basic and acidic residues. The segment covering 217 to 230 (DASAASAASTPTKA) has biased composition (low complexity). Residues 231-261 (IETKGEKQTKGAKDTKPKSETVEKKTVDKST) are compositionally biased toward basic and acidic residues. Residues 289 to 375 (GQKVGMRYVG…VFDVKLVEIK (87 aa)) enclose the PPIase FKBP-type domain.

This sequence belongs to the FKBP-type PPIase family. FKBP3/4 subfamily. In terms of assembly, binds to histones H3 and H4.

Its subcellular location is the nucleus. It carries out the reaction [protein]-peptidylproline (omega=180) = [protein]-peptidylproline (omega=0). Inhibited by both FK506 and rapamycin. PPIase that acts as a histone chaperone. Histone proline isomerase that increases the rate of cis-trans isomerization at prolines on the histone H3 N-terminal tail. Proline isomerization influences H3 methylation thereby regulating gene expression. The chain is FK506-binding protein 4 (FPR4) from Mycosarcoma maydis (Corn smut fungus).